Consider the following 548-residue polypeptide: DNA ligase (548 aa).

Glutamate 252 contacts ATP. The N6-AMP-lysine intermediate role is filled by lysine 254. ATP is bound by residues arginine 259, arginine 274, glutamate 303, phenylalanine 343, arginine 414, and lysine 420.

This sequence belongs to the ATP-dependent DNA ligase family. Requires Mg(2+) as cofactor.

It catalyses the reaction ATP + (deoxyribonucleotide)n-3'-hydroxyl + 5'-phospho-(deoxyribonucleotide)m = (deoxyribonucleotide)n+m + AMP + diphosphate.. DNA ligase that seals nicks in double-stranded DNA during DNA replication, DNA recombination and DNA repair. This is DNA ligase from Natronomonas pharaonis (strain ATCC 35678 / DSM 2160 / CIP 103997 / JCM 8858 / NBRC 14720 / NCIMB 2260 / Gabara) (Halobacterium pharaonis).